A 121-amino-acid chain; its full sequence is MILWGGSGGYLVIILYTIMPVKTIEEYEYDFFRFILIFFFFQKGSKHLSVVISILKYINAFKGLLFHVCLHFCSIHRRLFQYLVRVLQVFQLFFKAAVISGIFRYTIPIHFLQKFFKLFDN.

Helical transmembrane passes span methionine 1–valine 21, leucine 55–isoleucine 75, and leucine 92–leucine 112.

It is found in the membrane. This is an uncharacterized protein from Saccharomyces cerevisiae (strain ATCC 204508 / S288c) (Baker's yeast).